A 360-amino-acid polypeptide reads, in one-letter code: Phosphate acyltransferase (360 aa).

Belongs to the PlsX family. As to quaternary structure, homodimer. Probably interacts with PlsY.

Its subcellular location is the cytoplasm. It carries out the reaction a fatty acyl-[ACP] + phosphate = an acyl phosphate + holo-[ACP]. It participates in lipid metabolism; phospholipid metabolism. Functionally, catalyzes the reversible formation of acyl-phosphate (acyl-PO(4)) from acyl-[acyl-carrier-protein] (acyl-ACP). This enzyme utilizes acyl-ACP as fatty acyl donor, but not acyl-CoA. The chain is Phosphate acyltransferase from Caulobacter vibrioides (strain ATCC 19089 / CIP 103742 / CB 15) (Caulobacter crescentus).